A 303-amino-acid polypeptide reads, in one-letter code: Probable serine/threonine-protein kinase FPV212 (303 aa).

Residues 25–303 (WILGKQLGSG…NYESLKQMFL (279 aa)) form the Protein kinase domain. Residues 31 to 39 (LGSGGFGLV) and K54 each bind ATP. D160 acts as the Proton acceptor in catalysis.

This sequence belongs to the protein kinase superfamily. Ser/Thr protein kinase family. Poxviruses subfamily.

It catalyses the reaction L-seryl-[protein] + ATP = O-phospho-L-seryl-[protein] + ADP + H(+). The catalysed reaction is L-threonyl-[protein] + ATP = O-phospho-L-threonyl-[protein] + ADP + H(+). This chain is Probable serine/threonine-protein kinase FPV212, found in Vertebrata (FPV).